A 132-amino-acid chain; its full sequence is MSKIDKPLDSWREELTEEQFHICRLGGTERAFSGEYHATKTPGVYHCTCCGTALFDSDAKYDSGSGWPSYFQPVDGEAVRELDDFSHGMHRIEVRCGRCDAHLGHVFPDGPRPTGLRYCINSASLKLVPREG.

Residues 8–130 (LDSWREELTE…NSASLKLVPR (123 aa)) enclose the MsrB domain. Cys47, Cys50, Cys96, and Cys99 together coordinate Zn(2+). Catalysis depends on Cys119, which acts as the Nucleophile.

The protein belongs to the MsrB Met sulfoxide reductase family. Requires Zn(2+) as cofactor.

It carries out the reaction L-methionyl-[protein] + [thioredoxin]-disulfide + H2O = L-methionyl-(R)-S-oxide-[protein] + [thioredoxin]-dithiol. The polypeptide is Peptide methionine sulfoxide reductase MsrB (Pseudomonas paraeruginosa (strain DSM 24068 / PA7) (Pseudomonas aeruginosa (strain PA7))).